Reading from the N-terminus, the 655-residue chain is Kelch-like protein 13 (655 aa).

Residues 92 to 161 (CDVTLMPGDT…IYTAKLSLNM (70 aa)) enclose the BTB domain. The BACK domain maps to 196–297 (CVEVGRIANT…TPQELINYVQ (102 aa)). Kelch repeat units lie at residues 341 to 389 (HLVT…VIGN), 390 to 441 (FLYV…ALKG), 442 to 488 (YLYA…VYGG), 490 to 535 (MYIS…TVGE), 537 to 587 (LYVI…VFEN), and 588 to 636 (KIYV…TLTV).

In terms of assembly, component of the BCR(KLHL9-KLHL13) E3 ubiquitin ligase complex, at least composed of CUL3, KLHL9, KLHL13 and RBX1. Interacts with AURKB.

The protein operates within protein modification; protein ubiquitination. Substrate-specific adapter of a BCR (BTB-CUL3-RBX1) E3 ubiquitin-protein ligase complex required for mitotic progression and cytokinesis. The BCR(KLHL9-KLHL13) E3 ubiquitin ligase complex mediates the ubiquitination of AURKB and controls the dynamic behavior of AURKB on mitotic chromosomes and thereby coordinates faithful mitotic progression and completion of cytokinesis. In Homo sapiens (Human), this protein is Kelch-like protein 13 (KLHL13).